A 46-amino-acid polypeptide reads, in one-letter code: DNA-directed RNA polymerase subunit Rpo12 (46 aa).

Zn(2+) is bound by residues Cys9, Cys24, and Cys27.

It belongs to the archaeal Rpo12/eukaryotic RPC10 RNA polymerase subunit family. Part of the RNA polymerase complex. Interacts with Rpo3. Forms an Rpo3-Rpo10-Rpo11-Rpo12 complex upon coexpression. Zn(2+) serves as cofactor.

It localises to the cytoplasm. It carries out the reaction RNA(n) + a ribonucleoside 5'-triphosphate = RNA(n+1) + diphosphate. In terms of biological role, DNA-dependent RNA polymerase (RNAP) catalyzes the transcription of DNA into RNA using the four ribonucleoside triphosphates as substrates. The sequence is that of DNA-directed RNA polymerase subunit Rpo12 from Methanocaldococcus jannaschii (strain ATCC 43067 / DSM 2661 / JAL-1 / JCM 10045 / NBRC 100440) (Methanococcus jannaschii).